The chain runs to 136 residues: HTH-type transcriptional regulator LrpA (136 aa).

The HTH asnC-type domain maps to 2-63 (IDEIDKKILD…EVNQVKLGFS (62 aa)). Residues 21–40 (MKKLGEKVHLTAPATASRVV) constitute a DNA-binding region (H-T-H motif).

In terms of biological role, negative regulation of glyA transcription and kinB-dependent sporulation. The chain is HTH-type transcriptional regulator LrpA (lrpA) from Bacillus subtilis (strain 168).